The sequence spans 599 residues: Glutamine--fructose-6-phosphate aminotransferase [isomerizing] (599 aa).

C2 acts as the Nucleophile; for GATase activity in catalysis. The Glutamine amidotransferase type-2 domain maps to 2-223 (CGIIGYIGNE…DRDIVILRKE (222 aa)). SIS domains follow at residues 286-423 (LGKE…IIGK) and 452-589 (IAEE…VDKP). The For Fru-6P isomerization activity role is filled by K594.

As to quaternary structure, homodimer.

The protein resides in the cytoplasm. It catalyses the reaction D-fructose 6-phosphate + L-glutamine = D-glucosamine 6-phosphate + L-glutamate. In terms of biological role, catalyzes the first step in hexosamine metabolism, converting fructose-6P into glucosamine-6P using glutamine as a nitrogen source. In Methanococcus maripaludis (strain DSM 14266 / JCM 13030 / NBRC 101832 / S2 / LL), this protein is Glutamine--fructose-6-phosphate aminotransferase [isomerizing] (glmS).